Reading from the N-terminus, the 540-residue chain is Phosphoenolpyruvate carboxykinase (ATP) (540 aa).

Arg-65 is a binding site for substrate. Residue Lys-87 is modified to N6-acetyllysine. Tyr-207 and Lys-213 together coordinate substrate. ATP is bound by residues Lys-213, His-232, and 248–256; that span reads GLSGTGKTT. Mn(2+)-binding residues include Lys-213 and His-232. Asp-269 provides a ligand contact to Mn(2+). Residues Glu-297, Arg-333, 449-450, and Thr-455 each bind ATP; that span reads RI. Arg-333 is a binding site for substrate. Lys-523 is subject to N6-acetyllysine.

The protein belongs to the phosphoenolpyruvate carboxykinase (ATP) family. In terms of assembly, monomer. Mn(2+) is required as a cofactor.

Its subcellular location is the cytoplasm. The catalysed reaction is oxaloacetate + ATP = phosphoenolpyruvate + ADP + CO2. It functions in the pathway carbohydrate biosynthesis; gluconeogenesis. Functionally, involved in the gluconeogenesis. Catalyzes the conversion of oxaloacetate (OAA) to phosphoenolpyruvate (PEP) through direct phosphoryl transfer between the nucleoside triphosphate and OAA. The sequence is that of Phosphoenolpyruvate carboxykinase (ATP) from Escherichia coli O157:H7.